The chain runs to 127 residues: Glycine cleavage system H protein (127 aa).

In terms of domain architecture, Lipoyl-binding spans 22–104 (QVVIGITHFA…YEGAWMVKVE (83 aa)). Lys63 is modified (N6-lipoyllysine).

The protein belongs to the GcvH family. In terms of assembly, the glycine cleavage system is composed of four proteins: P, T, L and H. It depends on (R)-lipoate as a cofactor.

In terms of biological role, the glycine cleavage system catalyzes the degradation of glycine. The H protein shuttles the methylamine group of glycine from the P protein to the T protein. Functionally, is also involved in protein lipoylation via its role as an octanoyl/lipoyl carrier protein intermediate. This chain is Glycine cleavage system H protein, found in Bacillus cytotoxicus (strain DSM 22905 / CIP 110041 / 391-98 / NVH 391-98).